A 194-amino-acid polypeptide reads, in one-letter code: Ferredoxin, apicoplast (194 aa).

An apicoplast-targeting transit peptide spans 1 to 19 (MNIVILLLILTFSIKHSNT). In terms of domain architecture, 2Fe-2S ferredoxin-type spans 99-189 (YNITLRTNDG…DCVIETHKED (91 aa)). The [2Fe-2S] cluster site is built by Cys135, Cys140, Cys143, and Cys173.

Belongs to the 2Fe2S plant-type ferredoxin family. The cofactor is [2Fe-2S] cluster.

Its subcellular location is the plastid. The protein resides in the apicoplast. In terms of biological role, ferredoxins are iron-sulfur proteins that transfer electrons in a wide variety of metabolic reactions. By transferring electrons to 4-hydroxy-3-methylbut-2-enyl diphosphate reductase LytB/IspH, plays a role in the terminal step of the DOXP/MEP pathway for isoprenoid precursor biosynthesis. This is Ferredoxin, apicoplast from Plasmodium falciparum (isolate 3D7).